The sequence spans 858 residues: Elongation factor 2 (858 aa).

The tr-type G domain maps to 17–362 (ANIRNMSVIA…MITIHLPSPV (346 aa)). 26–33 (AHVDHGKS) serves as a coordination point for GTP. Thr54 is modified (phosphothreonine). Thr57 carries the phosphothreonine; by EEF2K modification. The residue at position 59 (Thr59) is a Phosphothreonine. Position 152 is an N6-succinyllysine (Lys152). Residues 158 to 161 (NKMD) and 216 to 218 (SGL) contribute to the GTP site. Lys235 is modified (N6-acetyllysine). Lys239 carries the N6-acetyllysine; alternate modification. A Glycyl lysine isopeptide (Lys-Gly) (interchain with G-Cter in SUMO1); alternate cross-link involves residue Lys239. A Phosphotyrosine; by CSK modification is found at Tyr265. The residue at position 272 (Lys272) is an N6-acetyllysine; alternate. Lys272 carries the N6-succinyllysine; alternate modification. Lys275 carries the N6-acetyllysine modification. Residue Lys322 forms a Glycyl lysine isopeptide (Lys-Gly) (interchain with G-Cter in SUMO) linkage. Residue Ser325 is modified to Phosphoserine. Tyr373 carries the phosphotyrosine; by CSK modification. Thr435 is subject to Phosphothreonine. N6-acetyllysine occurs at positions 439 and 445. At Ser502 the chain carries Phosphoserine. Lys525 is subject to N6,N6,N6-trimethyllysine; by EEF2KMT. Lys529 is covalently cross-linked (Glycyl lysine isopeptide (Lys-Gly) (interchain with G-Cter in SUMO)). An N6-succinyllysine modification is found at Lys572. The residue at position 595 (Ser595) is a Phosphoserine; by CDK2. Lys619 bears the N6-acetyllysine mark. Residue His715 is modified to Diphthamide.

It belongs to the TRAFAC class translation factor GTPase superfamily. Classic translation factor GTPase family. EF-G/EF-2 subfamily. In terms of assembly, binds to 80S ribosomes. Actively translating ribosomes show mutually exclusive binding of eIF5a (EIF5A or EIF5A2) and EEF2/eEF2. Interacts with SERBP1; interaction sequesters EEF2/eEF2 at the A-site of the ribosome, thereby blocking the interaction sites of the mRNA-tRNA complex, promoting ribosome stabilization and hibernation. Interacts with HABP4; interaction takes place at the A-site of hibernating ribosomes and promotes ribosome stabilization. Component of the mRNA surveillance SURF complex, at least composed of ERF1, ERF3 (ERF3A or ERF3B), EEF2, UPF1/RENT1, SMG1, SMG8 and SMG9. Interacts with RBPMS2. Phosphorylation by EF-2 kinase completely inactivates EF-2; it requires prior phosphorylation by CDK2 at Ser-595 during mitotic prometaphase. Phosphorylation by CSK promotes SUMOylation, proteolytic cleavage, and nuclear translocation if the C-terminal fragment. In terms of processing, diphthamide is 2-[3-carboxyamido-3-(trimethyl-ammonio)propyl]histidine. Post-translationally, ISGylated. Proteolytically processed at two sites following phosphorylation by CSK. In terms of processing, SUMOylated following phosphorylation by CSK, promotes proteolytic cleavage.

The protein resides in the cytoplasm. It is found in the nucleus. It catalyses the reaction GTP + H2O = GDP + phosphate + H(+). In terms of biological role, catalyzes the GTP-dependent ribosomal translocation step during translation elongation. During this step, the ribosome changes from the pre-translocational (PRE) to the post-translocational (POST) state as the newly formed A-site-bound peptidyl-tRNA and P-site-bound deacylated tRNA move to the P and E sites, respectively. Catalyzes the coordinated movement of the two tRNA molecules, the mRNA and conformational changes in the ribosome. The chain is Elongation factor 2 (EEF2) from Bos taurus (Bovine).